The chain runs to 570 residues: Multidrug and toxin extrusion protein 1 (570 aa).

M1 is subject to N-acetylmethionine. Residues 1-37 (MEAPEEPAPVRGGPEATLEIHGSRFLRLSAFREELRA) lie on the Cytoplasmic side of the membrane. A helical transmembrane segment spans residues 38–58 (LLVLAGPAFLVQLMVFLISFI). The Extracellular segment spans residues 59–72 (SSVFCGHLGKLELD). Residues 73 to 93 (AVTLAIAVINVTGVSVGFGLS) form a helical membrane-spanning segment. Residues 94-120 (SACDTLISQTYGSQNLKHVGVILQRSA) lie on the Cytoplasmic side of the membrane. Residues 121 to 141 (LILLLCCFPCWALFLNTQHIL) form a helical membrane-spanning segment. Topologically, residues 142 to 152 (LLFRQDPDVSR) are extracellular. A helical transmembrane segment spans residues 153 to 173 (LTQTYVTIFIPALPATFLYML). At 174-176 (QVK) the chain is on the cytoplasmic side. Residues 177-197 (YLLNQGIVLPQIVTGVAANLV) traverse the membrane as a helical segment. Residues 198–216 (NALANYLFLHQLHLGAIGS) are Extracellular-facing. Residues 217 to 237 (ALANLISQYTLALLLFFYILG) form a helical membrane-spanning segment. Residues 238–251 (KKLHQATWGGWSLE) are Cytoplasmic-facing. Residues 252–272 (CLQDWASFLHLAVPSMLMLCM) traverse the membrane as a helical segment. Topologically, residues 273 to 295 (EWWAYEVGSFLSGILGMVELGAQ) are extracellular. A helical membrane pass occupies residues 296 to 316 (SIVYELAIIVYMVPAGFSVAA). The Cytoplasmic portion of the chain corresponds to 317-336 (SVRVGNALGAGDMEQARKSS). A helical transmembrane segment spans residues 337-357 (TVSLLITVLFAVAFSVLLLSC). At 358-370 (KDHVGYIFTTDRD) the chain is on the extracellular side. Residues 371-391 (IINLVAQVVPIYAVSHLFEAL) form a helical membrane-spanning segment. Residues 392–408 (ACTSGGVLRGSGNQKVG) are Cytoplasmic-facing. A helical transmembrane segment spans residues 409–429 (AIVNTIGYYVVGLPIGIALMF). The Extracellular portion of the chain corresponds to 430-437 (ATKLGVMG). Residues 438 to 458 (LWSGIIICTVFQAVCFLGFII) traverse the membrane as a helical segment. Residues 459-546 (QLNWKKACQQ…LSRKQLVLRR (88 aa)) are Cytoplasmic-facing. The interval 508-534 (DVGKTGETQSDQQMRQEEPLPEHPQDS) is disordered. Over residues 521-533 (MRQEEPLPEHPQD) the composition is skewed to basic and acidic residues. The chain crosses the membrane as a helical span at residues 547–567 (GLLLLGVFLILLVGILVRFYV). Residues 568–570 (RIQ) lie on the Extracellular side of the membrane.

Belongs to the multi antimicrobial extrusion (MATE) (TC 2.A.66.1) family.

The protein resides in the cell membrane. Its subcellular location is the apical cell membrane. It carries out the reaction thiamine(out) + H(+)(in) = thiamine(in) + H(+)(out). It catalyses the reaction estrone 3-sulfate(in) + H(+)(out) = estrone 3-sulfate(out) + H(+)(in). The catalysed reaction is creatinine(in) + H(+)(out) = creatinine(out) + H(+)(in). The enzyme catalyses agmatine(in) + H(+)(out) = agmatine(out) + H(+)(in). In terms of biological role, multidrug efflux pump that functions as a H(+)/organic cation antiporter. Plays a physiological role in the excretion of cationic compounds including endogenous metabolites, drugs, toxins through the kidney and liver, into urine and bile respectively. Mediates the efflux of endogenous compounds such as creatinine, vitamin B1/thiamine, agmatine and estrone-3-sulfate. May also contribute to regulate the transport of cationic compounds in testis across the blood-testis-barrier. The polypeptide is Multidrug and toxin extrusion protein 1 (SLC47A1) (Pongo abelii (Sumatran orangutan)).